A 114-amino-acid polypeptide reads, in one-letter code: NAD(P)H-quinone oxidoreductase subunit M (114 aa).

It belongs to the complex I NdhM subunit family. NDH-1 can be composed of about 15 different subunits; different subcomplexes with different compositions have been identified which probably have different functions.

Its subcellular location is the cellular thylakoid membrane. It catalyses the reaction a plastoquinone + NADH + (n+1) H(+)(in) = a plastoquinol + NAD(+) + n H(+)(out). The catalysed reaction is a plastoquinone + NADPH + (n+1) H(+)(in) = a plastoquinol + NADP(+) + n H(+)(out). Functionally, NDH-1 shuttles electrons from an unknown electron donor, via FMN and iron-sulfur (Fe-S) centers, to quinones in the respiratory and/or the photosynthetic chain. The immediate electron acceptor for the enzyme in this species is believed to be plastoquinone. Couples the redox reaction to proton translocation, and thus conserves the redox energy in a proton gradient. Cyanobacterial NDH-1 also plays a role in inorganic carbon-concentration. This chain is NAD(P)H-quinone oxidoreductase subunit M, found in Acaryochloris marina (strain MBIC 11017).